Here is a 234-residue protein sequence, read N- to C-terminus: UPF0758 protein Smlt0399 (234 aa).

The region spanning 103-225 is the MPN domain; that stretch reads VGNNPAAVGR…PVSFAERGLL (123 aa). Residues His-174, His-176, and Asp-187 each contribute to the Zn(2+) site. Residues 174–187 carry the JAMM motif motif; that stretch reads HNHPSGDPEPSSAD.

This sequence belongs to the UPF0758 family.

This is UPF0758 protein Smlt0399 from Stenotrophomonas maltophilia (strain K279a).